We begin with the raw amino-acid sequence, 455 residues long: Epoxide hydrolase 1 (455 aa).

The chain crosses the membrane as a helical; Signal-anchor for type III membrane protein span at residues 1–21 (MWLELILASVLGFVIYWFVSR). Over 22 to 455 (DKEETLPLED…RKFVSLAELQ (434 aa)) the chain is Cytoplasmic. The active-site Nucleophile is the Asp226. Position 295 is a dimethylated arginine (Arg295). Tyr374 acts as the Proton donor in catalysis. His431 (proton acceptor) is an active-site residue. N6-acetyllysine is present on Lys439.

Belongs to the peptidase S33 family.

It is found in the microsome membrane. Its subcellular location is the endoplasmic reticulum membrane. The enzyme catalyses cis-stilbene oxide + H2O = (1R,2R)-hydrobenzoin. It catalyses the reaction 1-(4-methoxyphenyl)-N-methyl-N-[(3-methyloxetan-3-yl)methyl]methanamine + H2O = 2-{[(4-methoxybenzyl)(methyl)amino]methyl}-2-methylpropane-1,3-diol. It carries out the reaction 8,9-epoxy-(5Z,11Z,14Z)-eicosatrienoate + H2O = 8,9-dihydroxy-(5Z,11Z,14Z)-eicosatrienoate. The catalysed reaction is 11,12-epoxy-(5Z,8Z,14Z)-eicosatrienoate + H2O = 11,12-dihydroxy-(5Z,8Z,14Z)-eicosatrienoate. The enzyme catalyses 2-(5Z,8Z,11Z,14Z-eicosatetraenoyl)-glycerol + H2O = glycerol + (5Z,8Z,11Z,14Z)-eicosatetraenoate + H(+). With respect to regulation, inhibited by 10-hydroxystearamide and methoxy-arachidonyl fluorophosphate. Its function is as follows. Biotransformation enzyme that catalyzes the hydrolysis of arene and aliphatic epoxides to less reactive and more water soluble dihydrodiols by the trans addition of water. May play a role in the metabolism of endogenous lipids such as epoxide-containing fatty acids. Metabolizes the abundant endocannabinoid 2-arachidonoylglycerol (2-AG) to free arachidonic acid (AA) and glycerol. Binds 20(S)-hydroxycholesterol (20(S)-OHC). The protein is Epoxide hydrolase 1 of Mus musculus (Mouse).